The following is a 320-amino-acid chain: 7-acetyl-epi-neemfruitin B aldo-keto reductase (320 aa).

Asp-51 lines the NADP(+) pocket. Tyr-56 (proton donor) is an active-site residue. Residues Gln-186 and 264–272 each bind NADP(+); that span reads FNKQRMEEN.

It belongs to the aldo/keto reductase family. As to expression, mainly expressed in petioles and, to a lower extent, in roots.

The catalysed reaction is 7-acetyl-epi-neemfruitin B + AH2 + H2O = (1S,3bR,4R,5aR,9aR,9bR,11aS)-1-[(4R)-5-[(2S)-3,3-dimethyloxiran-2-yl]-1,4-dihydroxybutan-2-yl]-3b,6,6,9a,11a-pentamethyl-7-oxo-1H,2H,3bH,4H,5H,5aH,6H,7H,9aH,9bH,10H,11H,11aH-cyclopenta[a]phenanthren-4-yl acetate + acetate + A + H(+). It participates in secondary metabolite biosynthesis; terpenoid biosynthesis. Functionally, aldo-keto reductase involved in the biosynthesis of limonoids triterpene natural products such as azadirachtin, an antifeedant widely used as bioinsecticide, and possessing many medicinal applications including anti-tumoral, anti-malarial, anti-rheumatic, antibacterial, anti-inflammatory, anti-pyretic and diuretic effects. Can use 7-acetyl-epi-neemfruitin B as substrate. This chain is 7-acetyl-epi-neemfruitin B aldo-keto reductase, found in Melia azedarach (Chinaberry tree).